The sequence spans 111 residues: Putative gamma-glutamylcyclotransferase BH1612 (111 aa).

14–17 lines the substrate pocket; it reads YGHL. Catalysis depends on Glu55, which acts as the Proton acceptor.

It belongs to the gamma-glutamylcyclotransferase family.

Its function is as follows. Putative gamma-glutamylcyclotransferase. This chain is Putative gamma-glutamylcyclotransferase BH1612, found in Halalkalibacterium halodurans (strain ATCC BAA-125 / DSM 18197 / FERM 7344 / JCM 9153 / C-125) (Bacillus halodurans).